Here is a 365-residue protein sequence, read N- to C-terminus: Cobalt-precorrin-5B C(1)-methyltransferase (365 aa).

The protein belongs to the CbiD family.

It carries out the reaction Co-precorrin-5B + S-adenosyl-L-methionine = Co-precorrin-6A + S-adenosyl-L-homocysteine. The protein operates within cofactor biosynthesis; adenosylcobalamin biosynthesis; cob(II)yrinate a,c-diamide from sirohydrochlorin (anaerobic route): step 6/10. Its function is as follows. Catalyzes the methylation of C-1 in cobalt-precorrin-5B to form cobalt-precorrin-6A. This is Cobalt-precorrin-5B C(1)-methyltransferase from Variovorax paradoxus (strain S110).